Reading from the N-terminus, the 237-residue chain is Nodulation protein NolA (237 aa).

In terms of domain architecture, HTH merR-type spans 10–79 (RWRIGELAGA…LQEIRRAMDG (70 aa)). Positions 13–32 (IGELAGATGVTVRTLHHYEH) form a DNA-binding region, H-T-H motif.

Its function is as follows. Involved in genotype-specific nodulation of soybeans. This chain is Nodulation protein NolA (nolA), found in Bradyrhizobium sp. (strain NC92).